The primary structure comprises 89 residues: Small ribosomal subunit protein uS15 (89 aa).

The protein belongs to the universal ribosomal protein uS15 family. As to quaternary structure, part of the 30S ribosomal subunit. Forms a bridge to the 50S subunit in the 70S ribosome, contacting the 23S rRNA.

In terms of biological role, one of the primary rRNA binding proteins, it binds directly to 16S rRNA where it helps nucleate assembly of the platform of the 30S subunit by binding and bridging several RNA helices of the 16S rRNA. Functionally, forms an intersubunit bridge (bridge B4) with the 23S rRNA of the 50S subunit in the ribosome. In Xanthobacter autotrophicus (strain ATCC BAA-1158 / Py2), this protein is Small ribosomal subunit protein uS15.